Reading from the N-terminus, the 316-residue chain is L-lactate dehydrogenase 3 (316 aa).

Residues Val-16, Asp-37, Arg-42, and Tyr-68 each contribute to the NAD(+) site. Arg-91 lines the substrate pocket. Residues Ser-104, 121–123, and Thr-146 each bind NAD(+); that span reads ASN. 123 to 126 contacts substrate; it reads NPVD. 151–154 lines the substrate pocket; the sequence is DSSR. Residues Arg-156 and His-171 each coordinate beta-D-fructose 1,6-bisphosphate. His-178 serves as the catalytic Proton acceptor. Thr-233 is a binding site for substrate.

The protein belongs to the LDH/MDH superfamily. LDH family. Homotetramer.

Its subcellular location is the cytoplasm. It catalyses the reaction (S)-lactate + NAD(+) = pyruvate + NADH + H(+). Its pathway is fermentation; pyruvate fermentation to lactate; (S)-lactate from pyruvate: step 1/1. Its activity is regulated as follows. Allosterically activated by fructose 1,6-bisphosphate (FBP). In terms of biological role, catalyzes the conversion of lactate to pyruvate. The protein is L-lactate dehydrogenase 3 of Bacillus thuringiensis subsp. konkukian (strain 97-27).